The sequence spans 63 residues: Large ribosomal subunit protein eL37 (63 aa).

Zn(2+)-binding residues include Cys-20, Cys-23, Cys-35, and Cys-38. The C4-type zinc-finger motif lies at 20 to 38 (CRRCGHHSFNVRKGYCAHC).

It belongs to the eukaryotic ribosomal protein eL37 family. Zn(2+) is required as a cofactor.

Functionally, binds to the 23S rRNA. The sequence is that of Large ribosomal subunit protein eL37 from Thermofilum pendens (strain DSM 2475 / Hrk 5).